Here is a 514-residue protein sequence, read N- to C-terminus: 2,3-bisphosphoglycerate-independent phosphoglycerate mutase (514 aa).

Mn(2+)-binding residues include aspartate 14 and serine 64. Serine 64 (phosphoserine intermediate) is an active-site residue. Substrate-binding positions include histidine 125, 155 to 156 (RD), arginine 187, arginine 193, 263 to 266 (RADR), and lysine 336. Residues aspartate 403, histidine 407, aspartate 444, histidine 445, and histidine 463 each coordinate Mn(2+).

This sequence belongs to the BPG-independent phosphoglycerate mutase family. As to quaternary structure, monomer. Mn(2+) is required as a cofactor.

It catalyses the reaction (2R)-2-phosphoglycerate = (2R)-3-phosphoglycerate. The protein operates within carbohydrate degradation; glycolysis; pyruvate from D-glyceraldehyde 3-phosphate: step 3/5. Catalyzes the interconversion of 2-phosphoglycerate and 3-phosphoglycerate. This chain is 2,3-bisphosphoglycerate-independent phosphoglycerate mutase, found in Shewanella sp. (strain ANA-3).